The following is a 430-amino-acid chain: Histidine--tRNA ligase (430 aa).

The protein belongs to the class-II aminoacyl-tRNA synthetase family. As to quaternary structure, homodimer.

It is found in the cytoplasm. It carries out the reaction tRNA(His) + L-histidine + ATP = L-histidyl-tRNA(His) + AMP + diphosphate + H(+). The chain is Histidine--tRNA ligase from Acaryochloris marina (strain MBIC 11017).